The sequence spans 75 residues: Dermaseptin-SP3 (75 aa).

Residues 1 to 22 (MAFLKKSLFLVLFLGLVSLSMC) form the signal peptide. The propeptide occupies 23–45 (EEEKRENEVEEEQEDDEQSELRR). At proline 72 the chain carries Proline amide. The propeptide occupies 74–75 (EQ).

The protein belongs to the frog skin active peptide (FSAP) family. Dermaseptin subfamily. In terms of tissue distribution, expressed by the skin glands.

The protein localises to the secreted. Its subcellular location is the target cell membrane. Functionally, antimicrobial peptide with activity against Gram-positive and Gram-negative bacteria and fungi. Has been tested against E.coli (MIC=47.50-128 uM), S.aureus (MIC=189.98-512 uM), K.pneumoniae (MIC&gt;189.98 uM) and C.albicans (MIC&gt;189.98 uM). Probably acts by disturbing membrane functions with its alpha-helical amphipathic structure. May penetrate bacterial membranes, but stay at the mammalian membrane surface. Shows a very weak hemolytic activity. This is Dermaseptin-SP3 from Agalychnis spurrelli (Gliding leaf frog).